A 145-amino-acid polypeptide reads, in one-letter code: D-aminoacyl-tRNA deacylase (145 aa).

The Gly-cisPro motif, important for rejection of L-amino acids signature appears at 137–138 (GP).

This sequence belongs to the DTD family. Homodimer.

Its subcellular location is the cytoplasm. It catalyses the reaction glycyl-tRNA(Ala) + H2O = tRNA(Ala) + glycine + H(+). It carries out the reaction a D-aminoacyl-tRNA + H2O = a tRNA + a D-alpha-amino acid + H(+). In terms of biological role, an aminoacyl-tRNA editing enzyme that deacylates mischarged D-aminoacyl-tRNAs. Also deacylates mischarged glycyl-tRNA(Ala), protecting cells against glycine mischarging by AlaRS. Acts via tRNA-based rather than protein-based catalysis; rejects L-amino acids rather than detecting D-amino acids in the active site. By recycling D-aminoacyl-tRNA to D-amino acids and free tRNA molecules, this enzyme counteracts the toxicity associated with the formation of D-aminoacyl-tRNA entities in vivo and helps enforce protein L-homochirality. This chain is D-aminoacyl-tRNA deacylase, found in Pseudomonas aeruginosa (strain UCBPP-PA14).